A 325-amino-acid chain; its full sequence is Probable arylamine N-acetyltransferase 1 (325 aa).

The Acyl-thioester intermediate role is filled by cysteine 72. Catalysis depends on residues histidine 112 and aspartate 127.

It belongs to the arylamine N-acetyltransferase family.

It catalyses the reaction an arylamine + acetyl-CoA = an N-acetylarylamine + CoA. In Dictyostelium discoideum (Social amoeba), this protein is Probable arylamine N-acetyltransferase 1.